We begin with the raw amino-acid sequence, 418 residues long: MLHPRARTMLLLSLPAVAIGIASSLILIVVMKIASVLQNLLWQRLPGTLGIAQDSPLWIIGVLTLTGIAVGLVIRFSQGHAGPDPACEPLIGAPVPPSALPGLIVALILGLAGGVSLGPEHPIMTVNIALAVAIGARLLPRVNRMEWTILASAGTIGALFGTPVAAALIFSQTLNGSSEVPLWDRLFAPLMAAAAGALTTGLFFHPHFSLPIAHYGQMEMTDILSGAIVAAIAIAAGMVAVWCLPRLHAMMNQMKNPVLVLGIGGFILGILGVIGGPVSLFKGLDEMQQMVANQAFSTSDYFLLAVIKLAALVVAAASGFRGGRIFPAVFVGVALGLMLHEHVPAVPAAITVSCAILGIVLVVTRDGWLSLFMAAVVVPNTTLLPLLCIVMLPAWLLLAGKPMMMVNRPKQQPPHDNV.

The next 12 membrane-spanning stretches (helical) occupy residues 10-30, 54-74, 99-119, 120-140, 149-169, 186-206, 223-243, 258-278, 300-320, 322-342, 343-363, and 371-391; these read LLLS…LIVV, DSPL…GLVI, ALPG…SLGP, EHPI…RLLP, ILAS…AALI, LFAP…FFHP, ILSG…AVWC, VLVL…GGPV, DYFL…ASGF, GGRI…LHEH, VPAV…VLVV, and LFMA…CIVM.

It belongs to the chloride channel (TC 2.A.49) family.

Its subcellular location is the cell membrane. The protein is Putative ion-transport protein YfeO of Shigella boydii serotype 18 (strain CDC 3083-94 / BS512).